Consider the following 40-residue polypeptide: Photosystem II reaction center protein X (40 aa).

Residues 10–30 (FFYSILFGAIVLGLLGGGFIF) form a helical membrane-spanning segment.

Belongs to the PsbX family. Type 1 subfamily. As to quaternary structure, PSII is composed of 1 copy each of membrane proteins PsbA, PsbB, PsbC, PsbD, PsbE, PsbF, PsbH, PsbI, PsbJ, PsbK, PsbL, PsbM, PsbT, PsbX, PsbY, PsbZ, Psb30/Ycf12, peripheral proteins PsbO, CyanoQ (PsbQ), PsbU, PsbV and a large number of cofactors. It forms dimeric complexes.

Its subcellular location is the cellular thylakoid membrane. In terms of biological role, involved in the binding and/or turnover of quinones at the Q(B) site of photosystem II (PSII). PSII is a light-driven water plastoquinone oxidoreductase, using light energy to abstract electrons from H(2)O, generating a proton gradient subsequently used for ATP formation. The chain is Photosystem II reaction center protein X from Acaryochloris marina (strain MBIC 11017).